The sequence spans 209 residues: Outer-membrane lipoprotein carrier protein (209 aa).

Positions 1–24 are cleaved as a signal peptide; that stretch reads MTRYVISRLSAIALLALAPALALA.

The protein belongs to the LolA family. Monomer.

The protein resides in the periplasm. Participates in the translocation of lipoproteins from the inner membrane to the outer membrane. Only forms a complex with a lipoprotein if the residue after the N-terminal Cys is not an aspartate (The Asp acts as a targeting signal to indicate that the lipoprotein should stay in the inner membrane). The protein is Outer-membrane lipoprotein carrier protein of Bordetella avium (strain 197N).